Here is a 248-residue protein sequence, read N- to C-terminus: Ribonuclease PH (248 aa).

Phosphate is bound by residues Arg-86 and 124-126 (GTR).

The protein belongs to the RNase PH family. In terms of assembly, homohexameric ring arranged as a trimer of dimers.

It catalyses the reaction tRNA(n+1) + phosphate = tRNA(n) + a ribonucleoside 5'-diphosphate. Functionally, phosphorolytic 3'-5' exoribonuclease that plays an important role in tRNA 3'-end maturation. Removes nucleotide residues following the 3'-CCA terminus of tRNAs; can also add nucleotides to the ends of RNA molecules by using nucleoside diphosphates as substrates, but this may not be physiologically important. Probably plays a role in initiation of 16S rRNA degradation (leading to ribosome degradation) during starvation. The chain is Ribonuclease PH from Clostridium kluyveri (strain NBRC 12016).